The following is a 491-amino-acid chain: Nucleoporin NUP42 (491 aa).

Residues 1–25 (MAICNFFLQGRCRYGEKCWNEHPRG) form a C3H1-type zinc finger. Disordered stretches follow at residues 23-82 (PRGG…SQRY) and 92-111 (TTWINRDSEKPSAGSFSGFG). Residues 33–64 (RYQSQNRYQEQSRYQEQSRYPEQSRYPEQNRY) are compositionally biased toward polar residues. 10 FG repeats span residues 110 to 111 (FG), 259 to 260 (FG), 302 to 303 (FG), 312 to 313 (FG), 333 to 334 (FG), 342 to 343 (FG), 363 to 364 (FG), 375 to 376 (FG), 379 to 380 (FG), and 410 to 411 (FG).

In terms of assembly, probable component of the nuclear pore complex (NPC).

It is found in the nucleus. Its subcellular location is the nuclear pore complex. It localises to the nucleus membrane. Required for the export of mRNAs containing poly(A) tails from the nucleus into the cytoplasm. The protein is Nucleoporin NUP42 (nup42) of Xenopus laevis (African clawed frog).